A 228-amino-acid chain; its full sequence is Phosphoribosylformylglycinamidine synthase subunit PurQ (228 aa).

The 224-residue stretch at 3–226 (FAVVVFPGSN…VTYWRDAHVV (224 aa)) folds into the Glutamine amidotransferase type-1 domain. Cys-86 serves as the catalytic Nucleophile. Catalysis depends on residues His-195 and Glu-197.

In terms of assembly, part of the FGAM synthase complex composed of 1 PurL, 1 PurQ and 2 PurS subunits.

Its subcellular location is the cytoplasm. The enzyme catalyses N(2)-formyl-N(1)-(5-phospho-beta-D-ribosyl)glycinamide + L-glutamine + ATP + H2O = 2-formamido-N(1)-(5-O-phospho-beta-D-ribosyl)acetamidine + L-glutamate + ADP + phosphate + H(+). It carries out the reaction L-glutamine + H2O = L-glutamate + NH4(+). It functions in the pathway purine metabolism; IMP biosynthesis via de novo pathway; 5-amino-1-(5-phospho-D-ribosyl)imidazole from N(2)-formyl-N(1)-(5-phospho-D-ribosyl)glycinamide: step 1/2. Functionally, part of the phosphoribosylformylglycinamidine synthase complex involved in the purines biosynthetic pathway. Catalyzes the ATP-dependent conversion of formylglycinamide ribonucleotide (FGAR) and glutamine to yield formylglycinamidine ribonucleotide (FGAM) and glutamate. The FGAM synthase complex is composed of three subunits. PurQ produces an ammonia molecule by converting glutamine to glutamate. PurL transfers the ammonia molecule to FGAR to form FGAM in an ATP-dependent manner. PurS interacts with PurQ and PurL and is thought to assist in the transfer of the ammonia molecule from PurQ to PurL. The protein is Phosphoribosylformylglycinamidine synthase subunit PurQ of Anoxybacillus flavithermus (strain DSM 21510 / WK1).